Here is a 644-residue protein sequence, read N- to C-terminus: MFQDNPLLAQLKQQLHTQTPRVEGVVKGTEKGFGFLEVDGQKSYFIPPPQMKKVMHGDRIIATLHTDKDREIAEPETLVEPFLSRFVGRVQRKDDRLSIVPDHPLLRDAIQCRPVRELTHSFQNGDWAVAEMCRHPLKGDRAFQADLTAFITNGEDHFVPWWVTLARHNLEREAPAMVESALNDAELEREDLTALNFVTIDSASTEDMDDALFVQDNGDGSWLLTIAIADPTAYVVENSELDLTARKRAFTNYLPGFNIPMLPRDLSDNLCSLRPNERRPVLVCRVTITEEGTLSNDIRFSAAWVESKAKLVYDDVSDWLEGNNRWQPQDTAIAEQITLLKRICDARSNWRQQHALVFKDRPDYRFLLGEKGEVLDIIVEHRRIANRIVEECMIAANVCAALALREHLGFGIYNVHTGFDPALVEQAASVLKANGVGADPQALLTLPGFCELRRHLDALPTQFLDSRIRRFQTFAEISTVPGPHFGLGLEAYATWTSPIRKYGDMVNHRLLKAIITGQQAEKPQEEITVQLAERRRLNRMAERDVGDWLYARYLQPQAGTDTRFTAEIIDITRGGLRVRLLDNGAVAFIPAPFIHAVRDEVVCSQETGTVQIKGETVYSQSDKIEVRIAEVRMETRNVIARPVA.

The 328-residue stretch at 189–516 (REDLTALNFV…NHRLLKAIIT (328 aa)) folds into the RNB domain. The region spanning 561–643 (DTRFTAEIID…ETRNVIARPV (83 aa)) is the S1 motif domain.

It belongs to the RNR ribonuclease family. RNase II subfamily.

Its subcellular location is the cytoplasm. It carries out the reaction Exonucleolytic cleavage in the 3'- to 5'-direction to yield nucleoside 5'-phosphates.. In terms of biological role, involved in mRNA degradation. Hydrolyzes single-stranded polyribonucleotides processively in the 3' to 5' direction. This chain is Exoribonuclease 2, found in Yersinia pseudotuberculosis serotype O:3 (strain YPIII).